Here is a 556-residue protein sequence, read N- to C-terminus: Glutamine--tRNA ligase (556 aa).

A 'HIGH' region motif is present at residues 35–45 (PEPNGYLHIGH). ATP is bound by residues 36-38 (EPN) and 42-48 (HIGHAKS). 2 residues coordinate L-glutamine: aspartate 68 and tyrosine 213. ATP contacts are provided by residues threonine 232 and 262-263 (RL). A 'KMSKS' region motif is present at residues 269–273 (VTSKR).

This sequence belongs to the class-I aminoacyl-tRNA synthetase family. In terms of assembly, monomer.

It localises to the cytoplasm. The enzyme catalyses tRNA(Gln) + L-glutamine + ATP = L-glutaminyl-tRNA(Gln) + AMP + diphosphate. In Pseudomonas aeruginosa (strain ATCC 15692 / DSM 22644 / CIP 104116 / JCM 14847 / LMG 12228 / 1C / PRS 101 / PAO1), this protein is Glutamine--tRNA ligase.